The sequence spans 537 residues: Putative cysteine ligase BshC (537 aa).

A coiled-coil region spans residues 422–450 (IEKVEGMIEQQRRLNKDLLDEVAGNQNNI).

It belongs to the BshC family.

Its function is as follows. Involved in bacillithiol (BSH) biosynthesis. May catalyze the last step of the pathway, the addition of cysteine to glucosamine malate (GlcN-Mal) to generate BSH. In Staphylococcus aureus (strain USA300), this protein is Putative cysteine ligase BshC.